A 307-amino-acid chain; its full sequence is Pyridoxal 5'-phosphate synthase subunit PdxS (307 aa).

Positions 1–10 (MRGQPRPKLR) are enriched in basic residues. The disordered stretch occupies residues 1-20 (MRGQPRPKLRRMTEQQTGTP). Asp-37 lines the D-ribose 5-phosphate pocket. The active-site Schiff-base intermediate with D-ribose 5-phosphate is the Lys-94. D-ribose 5-phosphate is bound at residue Gly-166. Arg-178 provides a ligand contact to D-glyceraldehyde 3-phosphate. Residues Gly-227 and 248 to 249 (GS) each bind D-ribose 5-phosphate.

It belongs to the PdxS/SNZ family. In the presence of PdxT, forms a dodecamer of heterodimers.

It carries out the reaction aldehydo-D-ribose 5-phosphate + D-glyceraldehyde 3-phosphate + L-glutamine = pyridoxal 5'-phosphate + L-glutamate + phosphate + 3 H2O + H(+). The protein operates within cofactor biosynthesis; pyridoxal 5'-phosphate biosynthesis. Catalyzes the formation of pyridoxal 5'-phosphate from ribose 5-phosphate (RBP), glyceraldehyde 3-phosphate (G3P) and ammonia. The ammonia is provided by the PdxT subunit. Can also use ribulose 5-phosphate and dihydroxyacetone phosphate as substrates, resulting from enzyme-catalyzed isomerization of RBP and G3P, respectively. The chain is Pyridoxal 5'-phosphate synthase subunit PdxS from Deinococcus radiodurans (strain ATCC 13939 / DSM 20539 / JCM 16871 / CCUG 27074 / LMG 4051 / NBRC 15346 / NCIMB 9279 / VKM B-1422 / R1).